We begin with the raw amino-acid sequence, 483 residues long: V-type proton ATPase subunit H (483 aa).

A Phosphoserine modification is found at Ser-483.

Belongs to the V-ATPase H subunit family. As to quaternary structure, V-ATPase is a heteromultimeric enzyme made up of two complexes: the ATP-hydrolytic V1 complex and the proton translocation V0 complex. The V1 complex consists of three catalytic AB heterodimers that form a heterohexamer, three peripheral stalks each consisting of EG heterodimers, one central rotor including subunits D and F, and the regulatory subunits C and H. The proton translocation complex V0 consists of the proton transport subunit a, a ring of proteolipid subunits c9c'', rotary subunit d, subunits e and f, and the accessory subunits ATP6AP1/Ac45 and ATP6AP2/PRR. Interacts with AP2M1.

It localises to the cytoplasmic vesicle. It is found in the clathrin-coated vesicle membrane. Subunit of the V1 complex of vacuolar(H+)-ATPase (V-ATPase), a multisubunit enzyme composed of a peripheral complex (V1) that hydrolyzes ATP and a membrane integral complex (V0) that translocates protons. V-ATPase is responsible for acidifying and maintaining the pH of intracellular compartments and in some cell types, is targeted to the plasma membrane, where it is responsible for acidifying the extracellular environment. Subunit H is essential for V-ATPase activity, but not for the assembly of the complex. Involved in the endocytosis mediated by clathrin-coated pits, required for the formation of endosomes. The protein is V-type proton ATPase subunit H (ATP6V1H) of Sus scrofa (Pig).